The sequence spans 652 residues: DNA ligase (652 aa).

Residues 29 to 33 (DSQYD), 78 to 79 (SL), and E107 contribute to the NAD(+) site. K109 acts as the N6-AMP-lysine intermediate in catalysis. Residues R130, E164, K278, and K302 each coordinate NAD(+). Zn(2+) contacts are provided by C395, C398, C413, and C418. Residues 577–652 (STDAQLSGLT…IQDEDWLLNL (76 aa)) enclose the BRCT domain.

This sequence belongs to the NAD-dependent DNA ligase family. LigA subfamily. Mg(2+) is required as a cofactor. Mn(2+) serves as cofactor.

The enzyme catalyses NAD(+) + (deoxyribonucleotide)n-3'-hydroxyl + 5'-phospho-(deoxyribonucleotide)m = (deoxyribonucleotide)n+m + AMP + beta-nicotinamide D-nucleotide.. DNA ligase that catalyzes the formation of phosphodiester linkages between 5'-phosphoryl and 3'-hydroxyl groups in double-stranded DNA using NAD as a coenzyme and as the energy source for the reaction. It is essential for DNA replication and repair of damaged DNA. This is DNA ligase from Streptococcus agalactiae serotype III (strain NEM316).